A 930-amino-acid chain; its full sequence is Alanine--tRNA ligase (930 aa).

Zn(2+) is bound by residues H595, H599, C700, and H704.

This sequence belongs to the class-II aminoacyl-tRNA synthetase family. It depends on Zn(2+) as a cofactor.

The protein localises to the cytoplasm. The catalysed reaction is tRNA(Ala) + L-alanine + ATP = L-alanyl-tRNA(Ala) + AMP + diphosphate. In terms of biological role, catalyzes the attachment of alanine to tRNA(Ala) in a two-step reaction: alanine is first activated by ATP to form Ala-AMP and then transferred to the acceptor end of tRNA(Ala). Also edits incorrectly charged Ser-tRNA(Ala) and Gly-tRNA(Ala) via its editing domain. The polypeptide is Alanine--tRNA ligase (Malacoplasma penetrans (strain HF-2) (Mycoplasma penetrans)).